The following is a 160-amino-acid chain: Probable chemoreceptor glutamine deamidase CheD (160 aa).

It belongs to the CheD family.

The enzyme catalyses L-glutaminyl-[protein] + H2O = L-glutamyl-[protein] + NH4(+). Probably deamidates glutamine residues to glutamate on methyl-accepting chemotaxis receptors (MCPs), playing an important role in chemotaxis. In Desulfitobacterium hafniense (strain DSM 10664 / DCB-2), this protein is Probable chemoreceptor glutamine deamidase CheD.